The following is a 448-amino-acid chain: Exodeoxyribonuclease 7 large subunit (448 aa).

This sequence belongs to the XseA family. As to quaternary structure, heterooligomer composed of large and small subunits.

It is found in the cytoplasm. The enzyme catalyses Exonucleolytic cleavage in either 5'- to 3'- or 3'- to 5'-direction to yield nucleoside 5'-phosphates.. Bidirectionally degrades single-stranded DNA into large acid-insoluble oligonucleotides, which are then degraded further into small acid-soluble oligonucleotides. This is Exodeoxyribonuclease 7 large subunit from Shewanella sp. (strain MR-7).